Consider the following 303-residue polypeptide: Guanosine-inosine kinase (303 aa).

The protein belongs to the carbohydrate kinase PfkB family. In terms of assembly, homodimer. Requires Mg(2+) as cofactor.

The enzyme catalyses guanosine + ATP = GMP + ADP + H(+). It carries out the reaction inosine + ATP = IMP + ADP + H(+). Its pathway is purine metabolism; IMP biosynthesis via salvage pathway; IMP from inosine: step 1/1. It functions in the pathway purine metabolism; GMP biosynthesis via salvage pathway. Kinase activity is stimulated by pyrimidine nucleotides, especially CMP and CTP, and inhibited by AMP, ADP and GMP. Activity is stimulated by potassium or ammonium ions. Functionally, catalyzes the phosphorylation of guanosine and inosine to GMP and IMP, respectively. Can also use deoxyguanosine. Shows a strong preference for guanosine. dATP, GTP and dGTP can serve as phosphate donors. This Exiguobacterium acetylicum (Brevibacterium acetylicum) protein is Guanosine-inosine kinase.